Consider the following 228-residue polypeptide: Urease accessory protein UreF (228 aa).

Belongs to the UreF family. As to quaternary structure, ureD, UreF and UreG form a complex that acts as a GTP-hydrolysis-dependent molecular chaperone, activating the urease apoprotein by helping to assemble the nickel containing metallocenter of UreC. The UreE protein probably delivers the nickel.

The protein localises to the cytoplasm. In terms of biological role, required for maturation of urease via the functional incorporation of the urease nickel metallocenter. The sequence is that of Urease accessory protein UreF from Alkalilimnicola ehrlichii (strain ATCC BAA-1101 / DSM 17681 / MLHE-1).